Here is a 678-residue protein sequence, read N- to C-terminus: Glycine--tRNA ligase beta subunit (678 aa).

It belongs to the class-II aminoacyl-tRNA synthetase family. Tetramer of two alpha and two beta subunits.

It is found in the cytoplasm. It carries out the reaction tRNA(Gly) + glycine + ATP = glycyl-tRNA(Gly) + AMP + diphosphate. The protein is Glycine--tRNA ligase beta subunit of Sulfurihydrogenibium sp. (strain YO3AOP1).